The chain runs to 153 residues: Putative nuclear shuttle protein (153 aa).

The protein belongs to the nanoviridae nuclear shuttle protein family.

It localises to the host nucleus. The protein localises to the host cytoplasm. Putative nuclear shuttle protein. The sequence is that of Putative nuclear shuttle protein (DNA-N) from Cicer arietinum (Chickpea).